A 341-amino-acid polypeptide reads, in one-letter code: Phosphate acyltransferase (341 aa).

This sequence belongs to the PlsX family. As to quaternary structure, homodimer. Probably interacts with PlsY.

It is found in the cytoplasm. The catalysed reaction is a fatty acyl-[ACP] + phosphate = an acyl phosphate + holo-[ACP]. It functions in the pathway lipid metabolism; phospholipid metabolism. In terms of biological role, catalyzes the reversible formation of acyl-phosphate (acyl-PO(4)) from acyl-[acyl-carrier-protein] (acyl-ACP). This enzyme utilizes acyl-ACP as fatty acyl donor, but not acyl-CoA. This Aliivibrio fischeri (strain ATCC 700601 / ES114) (Vibrio fischeri) protein is Phosphate acyltransferase.